The following is a 179-amino-acid chain: Large ribosomal subunit protein uL5 (179 aa).

Belongs to the universal ribosomal protein uL5 family. As to quaternary structure, part of the 50S ribosomal subunit; part of the 5S rRNA/L5/L18/L25 subcomplex. Contacts the 5S rRNA and the P site tRNA. Forms a bridge to the 30S subunit in the 70S ribosome.

Its function is as follows. This is one of the proteins that bind and probably mediate the attachment of the 5S RNA into the large ribosomal subunit, where it forms part of the central protuberance. In the 70S ribosome it contacts protein S13 of the 30S subunit (bridge B1b), connecting the 2 subunits; this bridge is implicated in subunit movement. Contacts the P site tRNA; the 5S rRNA and some of its associated proteins might help stabilize positioning of ribosome-bound tRNAs. In Burkholderia ambifaria (strain MC40-6), this protein is Large ribosomal subunit protein uL5.